The following is a 181-amino-acid chain: Large ribosomal subunit protein uL5 (181 aa).

Belongs to the universal ribosomal protein uL5 family. In terms of assembly, part of the 50S ribosomal subunit; part of the 5S rRNA/L5/L18/L25 subcomplex. Contacts the 5S rRNA and the P site tRNA. Forms a bridge to the 30S subunit in the 70S ribosome.

Functionally, this is one of the proteins that bind and probably mediate the attachment of the 5S RNA into the large ribosomal subunit, where it forms part of the central protuberance. In the 70S ribosome it contacts protein S13 of the 30S subunit (bridge B1b), connecting the 2 subunits; this bridge is implicated in subunit movement. Contacts the P site tRNA; the 5S rRNA and some of its associated proteins might help stabilize positioning of ribosome-bound tRNAs. This Trichodesmium erythraeum (strain IMS101) protein is Large ribosomal subunit protein uL5.